Here is a 232-residue protein sequence, read N- to C-terminus: Vacuolar iron transporter homolog 1 (232 aa).

Residues 1-59 are Cytoplasmic-facing; it reads MAIDLGCHVGCASPETKQEETADPTAAPVVVDDVEAAAGGRRPGDGGGVNYVARAQWLR. The chain crosses the membrane as a helical span at residues 60–80; that stretch reads AAVLGANDGLVSVASLMVGVG. Over 81-89 the chain is Vacuolar; it reads AANGTRRAM. Residues 90–110 traverse the membrane as a helical segment; that stretch reads LVSGLAGLVAGACSMAIGEFV. The Cytoplasmic segment spans residues 111–148; the sequence is SVYAQCDIQAAQIERARGGKDADGGEEEEELPSPTMAA. Residues 149–169 traverse the membrane as a helical segment; it reads VASALSFAAGAALPLLAGGFV. Topologically, residues 170–175 are vacuolar; the sequence is RPWAAR. The helical transmembrane segment at 176-196 threads the bilayer; the sequence is VAAVCAASSLGLAGFGVASAY. The Cytoplasmic portion of the chain corresponds to 197-208; it reads LGGAGVARSGVR. The chain crosses the membrane as a helical span at residues 209-229; that stretch reads MLVGGWLAMAVTYGVLKLFGM. At 230 to 232 the chain is on the vacuolar side; that stretch reads HGV.

This sequence belongs to the CCC1 family.

The protein localises to the vacuole membrane. It catalyses the reaction Fe(2+)(in) = Fe(2+)(out). Its function is as follows. Probable vacuolar iron transporter that may be involved in the regulation of iron distribution throughout the plant. The chain is Vacuolar iron transporter homolog 1 from Oryza sativa subsp. japonica (Rice).